Reading from the N-terminus, the 461-residue chain is Cysteine--tRNA ligase (461 aa).

Cysteine 30 lines the Zn(2+) pocket. Residues 32–42 (VTIYDLCHIGH) carry the 'HIGH' region motif. 3 residues coordinate Zn(2+): cysteine 211, histidine 236, and glutamate 240. The short motif at 268–272 (KMSKS) is the 'KMSKS' region element. Lysine 271 contributes to the ATP binding site.

It belongs to the class-I aminoacyl-tRNA synthetase family. In terms of assembly, monomer. Zn(2+) serves as cofactor.

It localises to the cytoplasm. The enzyme catalyses tRNA(Cys) + L-cysteine + ATP = L-cysteinyl-tRNA(Cys) + AMP + diphosphate. This Shewanella sp. (strain W3-18-1) protein is Cysteine--tRNA ligase.